Reading from the N-terminus, the 462-residue chain is MTKNHKLWGGRFESSLEKWVEEFGASISFDQKLAPYDMKASMAHVTMLGKTDIISQEEAGLIKDGLKILQDKYRAGQLTFSISNEDIHMNIESLLTAEIGEVAGKLHTARSRNDQVATDMHLYLKDKLQEMMKKLLHLRTTLVNLAENHIYTVMPGYTHLQHAQPISFGHHLMAYYNMFTRDTERLEFNMKHTDLSPLGAAALAGTTFPIDRHMTTRLLDFEKPYSNSLDAVSDRDFIIEFLSNASILMMHLSRFCEEIINWCSYEYQFITLSDTFSTGSSIMPQKKNPDMAELIRGKTGRVYGNLFSLLTVMKSLPLAYNKDLQEDKEGMFDSVETVSIAIEIMANMLETMTVNEHIMMTSTETDFSNATELADYLASKGIPFRKAHEIVGKLVLECSKNGSYLQDIPLKYYQEISELIENDIYEILTAKTAVKRRNSLGGTGFDQVKEQILLARKELKAE.

The protein belongs to the lyase 1 family. Argininosuccinate lyase subfamily.

The protein localises to the cytoplasm. It carries out the reaction 2-(N(omega)-L-arginino)succinate = fumarate + L-arginine. It functions in the pathway amino-acid biosynthesis; L-arginine biosynthesis; L-arginine from L-ornithine and carbamoyl phosphate: step 3/3. This is Argininosuccinate lyase from Streptococcus agalactiae serotype III (strain NEM316).